The chain runs to 521 residues: AAA ATPase forming ring-shaped complexes (521 aa).

A coiled-coil region spans residues 4–44 (TEDLAALNDRLMAKNHALAEALSRAGKELTKAKSQLAQLAQ). 235 to 240 (GNGKTM) contributes to the ATP binding site.

This sequence belongs to the AAA ATPase family. In terms of assembly, homohexamer. Assembles into a hexameric ring structure.

This Bifidobacterium longum (strain DJO10A) protein is AAA ATPase forming ring-shaped complexes.